The sequence spans 594 residues: Cytoplasmic polyadenylation element-binding protein 1 (594 aa).

Residues 1 to 33 (MQHQVKACGDSKSTTRSLQGNRRSGAASLKKPS) are disordered. Residues 11–22 (SKSTTRSLQGNR) show a composition bias toward polar residues. 2 RRM domains span residues 257–364 (RKVF…PWRL) and 381–452 (RTVF…HAET). The interval 519–560 (TGDQTRILPRPPHHQSSHYSPRSHQMMNHDSMESSNQSRGNT) is disordered. Residues 535–560 (SHYSPRSHQMMNHDSMESSNQSRGNT) are compositionally biased toward polar residues.

In terms of assembly, interacts with fbf-1.

Cytoplasmic polyadenylation element binding protein that binds to and regulates the translation of specific mRNAs. Essential for progression through meiosis. Involved in spermatogenesis. This Caenorhabditis remanei (Caenorhabditis vulgaris) protein is Cytoplasmic polyadenylation element-binding protein 1 (cpb-1).